Here is a 104-residue protein sequence, read N- to C-terminus: L-rhamnose mutarotase (104 aa).

Y18 is a substrate binding site. The active-site Proton donor is the H22. Residues Y41 and 76-77 contribute to the substrate site; that span reads WW.

Belongs to the rhamnose mutarotase family. Homodimer.

It is found in the cytoplasm. It catalyses the reaction alpha-L-rhamnose = beta-L-rhamnose. It participates in carbohydrate metabolism; L-rhamnose metabolism. Its function is as follows. Involved in the anomeric conversion of L-rhamnose. The protein is L-rhamnose mutarotase of Rhizobium meliloti (strain 1021) (Ensifer meliloti).